The sequence spans 207 residues: Uracil phosphoribosyltransferase (207 aa).

5-phospho-alpha-D-ribose 1-diphosphate-binding positions include Arg-77, Arg-102, and 129-137 (DPMLATGGS). Uracil contacts are provided by residues Ile-192 and 197 to 199 (GDA). Residue Asp-198 coordinates 5-phospho-alpha-D-ribose 1-diphosphate.

This sequence belongs to the UPRTase family. Mg(2+) serves as cofactor.

It carries out the reaction UMP + diphosphate = 5-phospho-alpha-D-ribose 1-diphosphate + uracil. Its pathway is pyrimidine metabolism; UMP biosynthesis via salvage pathway; UMP from uracil: step 1/1. Its activity is regulated as follows. Allosterically activated by GTP. Its function is as follows. Catalyzes the conversion of uracil and 5-phospho-alpha-D-ribose 1-diphosphate (PRPP) to UMP and diphosphate. The sequence is that of Uracil phosphoribosyltransferase from Mycoplasma mycoides subsp. mycoides SC (strain CCUG 32753 / NCTC 10114 / PG1).